Reading from the N-terminus, the 366-residue chain is Putative RING-H2 finger protein ATL21C (366 aa).

A signal peptide spans 1-23; it reads MTFSKQLFPFVFFLLFLVSLRHA. A helical transmembrane segment spans residues 243–263; that stretch reads LVLVISLSAVTVFVFPTCIAI. The segment at 320 to 362 adopts an RING-type; atypical zinc-finger fold; the sequence is CPICLSEYASKETVRFIPECDHCFHVECIDVWLKIHGSCPLCR.

The protein belongs to the RING-type zinc finger family. ATL subfamily.

The protein localises to the membrane. The catalysed reaction is S-ubiquitinyl-[E2 ubiquitin-conjugating enzyme]-L-cysteine + [acceptor protein]-L-lysine = [E2 ubiquitin-conjugating enzyme]-L-cysteine + N(6)-ubiquitinyl-[acceptor protein]-L-lysine.. It functions in the pathway protein modification; protein ubiquitination. The polypeptide is Putative RING-H2 finger protein ATL21C (ATL21C) (Arabidopsis thaliana (Mouse-ear cress)).